A 930-amino-acid chain; its full sequence is Isoleucine--tRNA ligase (930 aa).

A 'HIGH' region motif is present at residues 57–67; it reads PYANGNIHVGH. Position 554 (glutamate 554) interacts with L-isoleucyl-5'-AMP. Positions 595-599 match the 'KMSKS' region motif; the sequence is KMSKS. Lysine 598 provides a ligand contact to ATP. The Zn(2+) site is built by cysteine 888, cysteine 891, cysteine 908, and cysteine 911.

It belongs to the class-I aminoacyl-tRNA synthetase family. IleS type 1 subfamily. In terms of assembly, monomer. Zn(2+) is required as a cofactor.

It localises to the cytoplasm. The catalysed reaction is tRNA(Ile) + L-isoleucine + ATP = L-isoleucyl-tRNA(Ile) + AMP + diphosphate. In terms of biological role, catalyzes the attachment of isoleucine to tRNA(Ile). As IleRS can inadvertently accommodate and process structurally similar amino acids such as valine, to avoid such errors it has two additional distinct tRNA(Ile)-dependent editing activities. One activity is designated as 'pretransfer' editing and involves the hydrolysis of activated Val-AMP. The other activity is designated 'posttransfer' editing and involves deacylation of mischarged Val-tRNA(Ile). This is Isoleucine--tRNA ligase from Streptococcus pneumoniae (strain CGSP14).